We begin with the raw amino-acid sequence, 102 residues long: uncharacterized protein (102 aa).

The tract at residues 79 to 102 is disordered; it reads AELLHPSPAPMPPATHGRSAAPCS.

This is an uncharacterized protein from Homo sapiens (Human).